A 488-amino-acid chain; its full sequence is Splicing factor U2AF 65 kDa subunit (488 aa).

2 stretches are compositionally biased toward basic and acidic residues: residues 25–55 and 78–129; these read LESL…DEDR and DRRD…KYRF. The tract at residues 25 to 133 is disordered; it reads LESLQEDVKP…PKKYRFWDVP (109 aa). 3 RRM domains span residues 175 to 257, 282 to 359, and 389 to 479; these read RRLY…RPRD, NKIF…LACA, and EILC…YYDV.

This sequence belongs to the splicing factor SR family. As to quaternary structure, forms a heterodimer with the U2AF small subunit.

It localises to the nucleus. In terms of biological role, necessary for the splicing of pre-mRNA. Binds to the polypyrimidine tract of introns early during spliceosome assembly. This chain is Splicing factor U2AF 65 kDa subunit (uaf-1), found in Caenorhabditis briggsae.